An 865-amino-acid polypeptide reads, in one-letter code: Nitrogen regulatory protein nrfA (865 aa).

5 disordered regions span residues 1 to 75 (MEGI…DEMQ), 115 to 140 (RKER…PSGI), 177 to 227 (FDSP…QDQR), 557 to 605 (GSTD…RTAS), and 617 to 663 (LNGS…AGPT). The span at 32–46 (DDFTFDSPFSSSGSS) shows a compositional bias: low complexity. 2 stretches are compositionally biased toward basic and acidic residues: residues 115–126 (RKEREQQEREQQ) and 180–189 (PAEHPSHPSA). Residues 582 to 592 (ASVSDVRNQNQ) are compositionally biased toward polar residues. The GATA-type zinc finger occupies 665–689 (CTNCFTQTTPLWRRNPEGQPLCNAC). The tract at residues 713 to 854 (NRSSANTLAV…NHSIAGGQGA (142 aa)) is disordered. Composition is skewed to polar residues over residues 715-724 (SSANTLAVGT) and 737-764 (IQHA…SNTL). 2 stretches are compositionally biased toward low complexity: residues 771-786 (PIAA…AGVA) and 830-844 (PLAP…ANPA).

Its subcellular location is the nucleus. In terms of biological role, major nitrogen regulatory protein. The chain is Nitrogen regulatory protein nrfA (nrfA) from Penicillium urticae.